Consider the following 258-residue polypeptide: Type III pantothenate kinase (258 aa).

6–13 is a binding site for ATP; that stretch reads DVGNTNTV. Substrate-binding positions include Tyr100 and 107–110; that span reads GADR. Asp109 serves as the catalytic Proton acceptor. K(+) is bound at residue Asp129. Thr132 is a binding site for ATP. Thr184 contributes to the substrate binding site.

This sequence belongs to the type III pantothenate kinase family. Homodimer. NH4(+) is required as a cofactor. It depends on K(+) as a cofactor.

The protein resides in the cytoplasm. It catalyses the reaction (R)-pantothenate + ATP = (R)-4'-phosphopantothenate + ADP + H(+). It participates in cofactor biosynthesis; coenzyme A biosynthesis; CoA from (R)-pantothenate: step 1/5. Its activity is regulated as follows. Not regulated by feedback inhibition by CoA and its thioesters as described for many other pantothenate kinases. Not inhibited by N-pentylpantothenamide (N5-Pan), and this compound cannot act as a substrate either. Functionally, catalyzes the phosphorylation of pantothenate (Pan), the first step in CoA biosynthesis. Cannot utilize a phosphoryl donor other than ATP. This Bacillus subtilis (strain 168) protein is Type III pantothenate kinase (coaX).